A 536-amino-acid chain; its full sequence is MWRLLLALLLVSSVCCESELFRDDLRTPETMAYINGLMQRRHQMQQEAQQHIQAIPPAVPLQSPGLVNGLGNQNDPALNRISGTSVKPSNLPAAYSNGYVDLATSDRIANSVLNFANILGQHLANGKTQIYSPLSIVHSLALLLLGAKGRSYEELSTVFDIPDTSRLHEQFGLMLQDLQQPTREAISAGRPLTDWRASSAMRSNRRAQRPGAHEVHLANGLFTQTGYTLNPDYRRVIVEVYASDLQIQDFEGSPATARYNINAYVAQHTKNHIENIIASDIPQTTRMILANALYFKAFWETDFIESATRPDNFYPNGEGTEPVMRVQMMATGGAYPYHEDHELGCKIIGLPYRGNLSTMYIIQPFKSSVRELMALQKRLTADKIESMISRMYRRAALVAFPKMHLTESVNLKTVMQRMGLGGIFSAVQNDLSLIATNEATRTNALGGNSLQNLEAQRRAGTGGARSDLVVDDIVHKVDFTVNEQGTEAAASSVTYLKKSGPDVLFRGDTPFMVLVRHDPTKLVLFYGLINEPPAAA.

Residues 1–16 form the signal peptide; it reads MWRLLLALLLVSSVCC. An N-linked (GlcNAc...) asparagine glycan is attached at N355.

This sequence belongs to the serpin family.

Its subcellular location is the secreted. Functionally, serine protease inhibitor which is required for pupal viability and plays an essential role in regulating the melanization reaction. Inhibits spontaneous melanization and appears to be involved in the melanization immune response to physical wounding in larvae and adults. Acts by negatively regulating the Hayan-phenoloxidase (PPO1) cascade in the hemolymph and possibly the trachea. May function by controlling the initial release of the activated form of PPO1, phenoloxidase (PO) and thus maintains PO availability for processes such as wound response and pigmentation. In Drosophila melanogaster (Fruit fly), this protein is Serine protease inhibitor 28Dc.